The primary structure comprises 227 residues: Cytochrome c oxidase subunit 2 (227 aa).

Over 1 to 14 the chain is Mitochondrial intermembrane; sequence MAYPFELGFQDATS. A helical transmembrane segment spans residues 15-45; the sequence is PIMEELLHFHDHTLMIVFLISSLVLYIISLM. Residues 46–59 lie on the Mitochondrial matrix side of the membrane; it reads LTTKLTHTSTMDAQ. A helical membrane pass occupies residues 60–87; that stretch reads EIETIWTILPAIILILIALPSLRILYMM. The Mitochondrial intermembrane portion of the chain corresponds to 88-227; it reads DEINDPSLTV…HFENWSSSML (140 aa). Cu cation is bound by residues H161, C196, E198, C200, H204, and M207. Residue E198 participates in Mg(2+) binding.

This sequence belongs to the cytochrome c oxidase subunit 2 family. Component of the cytochrome c oxidase (complex IV, CIV), a multisubunit enzyme composed of 14 subunits. The complex is composed of a catalytic core of 3 subunits MT-CO1, MT-CO2 and MT-CO3, encoded in the mitochondrial DNA, and 11 supernumerary subunits COX4I, COX5A, COX5B, COX6A, COX6B, COX6C, COX7A, COX7B, COX7C, COX8 and NDUFA4, which are encoded in the nuclear genome. The complex exists as a monomer or a dimer and forms supercomplexes (SCs) in the inner mitochondrial membrane with NADH-ubiquinone oxidoreductase (complex I, CI) and ubiquinol-cytochrome c oxidoreductase (cytochrome b-c1 complex, complex III, CIII), resulting in different assemblies (supercomplex SCI(1)III(2)IV(1) and megacomplex MCI(2)III(2)IV(2)). Found in a complex with TMEM177, COA6, COX18, COX20, SCO1 and SCO2. Interacts with TMEM177 in a COX20-dependent manner. Interacts with COX20. Interacts with COX16. The cofactor is Cu cation.

The protein resides in the mitochondrion inner membrane. It carries out the reaction 4 Fe(II)-[cytochrome c] + O2 + 8 H(+)(in) = 4 Fe(III)-[cytochrome c] + 2 H2O + 4 H(+)(out). Functionally, component of the cytochrome c oxidase, the last enzyme in the mitochondrial electron transport chain which drives oxidative phosphorylation. The respiratory chain contains 3 multisubunit complexes succinate dehydrogenase (complex II, CII), ubiquinol-cytochrome c oxidoreductase (cytochrome b-c1 complex, complex III, CIII) and cytochrome c oxidase (complex IV, CIV), that cooperate to transfer electrons derived from NADH and succinate to molecular oxygen, creating an electrochemical gradient over the inner membrane that drives transmembrane transport and the ATP synthase. Cytochrome c oxidase is the component of the respiratory chain that catalyzes the reduction of oxygen to water. Electrons originating from reduced cytochrome c in the intermembrane space (IMS) are transferred via the dinuclear copper A center (CU(A)) of subunit 2 and heme A of subunit 1 to the active site in subunit 1, a binuclear center (BNC) formed by heme A3 and copper B (CU(B)). The BNC reduces molecular oxygen to 2 water molecules using 4 electrons from cytochrome c in the IMS and 4 protons from the mitochondrial matrix. This is Cytochrome c oxidase subunit 2 (MT-CO2) from Tamias townsendii (Townsend's chipmunk).